Consider the following 153-residue polypeptide: D-amino acid oxidase regulator (153 aa).

The involved in targeting to the mitochondrion stretch occupies residues 1–25 (MLEKLMGADSLQLFRSRYTLGKIYF). An interaction with DAO region spans residues 138-153 (KDQSCNHKEITSTKAE).

As to quaternary structure, interacts with DAO (D-amino acid oxidase); the interaction is direct, can occur in the presence or absence of FAD or substrate bound to DAO, and results in a complex containing two DAO homodimers and two DAOA monomers. Interacts with DDO (D-aspartate oxidase); the interaction is direct. Interacts wih SOD1; the interaction is direct. Interacts with MSRB2; the interaction is direct. As to expression, expressed in the amygdala and in astrocytes of the cortex (at protein level). Expressed in the caudate nucleus, spinal cord and testis.

The protein localises to the cytoplasm. The protein resides in the cytosol. It localises to the golgi apparatus. It is found in the mitochondrion. Functionally, may suppress DAO (D-amino acid oxidase) and SOD1 activity and promote their degradation. Has conversely also been suggested to function as a DAO activator. May stimulate the degradation of DDO (D-aspartate oxidase). May play a role in mitochondrial fission. The protein is D-amino acid oxidase regulator (DAOA) of Homo sapiens (Human).